We begin with the raw amino-acid sequence, 1784 residues long: Protein mel-28 (1784 aa).

Residues 1–956 (MDNENSSIFK…QNDDEDMPEV (956 aa)) are required for nuclear envelope and kinetochore localization. Positions 566–778 (GKIEEFCQLA…TSPEDSEHSE (213 aa)) are required for association with mitotic chromosomes. The important for nuclear localization stretch occupies residues 846-1071 (APMTVTIGKH…HNSILKTAKG (226 aa)). Disordered regions lie at residues 945-994 (KVQN…AKRI) and 1115-1784 (ETMT…RAKQ). Basic and acidic residues predominate over residues 1126 to 1149 (GKHDEEKDSEKNVVDEMEEVKDQE). 2 stretches are compositionally biased toward acidic residues: residues 1222 to 1232 (LEEEGEDEDIW) and 1266 to 1278 (VNEEEVVESEEVQ). Positions 1239 to 1601 (FEVQMDEDCE…TTVDPSSSAL (363 aa)) are chromatin binding. Residues 1279–1293 (QDAKEPEKTEKRQEE) are compositionally biased toward basic and acidic residues. Low complexity predominate over residues 1297–1306 (EVMQPVIPEE). Over residues 1321-1336 (ELQEEPDIVPTGDEDT) the composition is skewed to acidic residues. The span at 1337–1351 (ADKVQEQAVEEDRPP) shows a compositional bias: basic and acidic residues. The segment covering 1352–1366 (SRNTRSSSVQKSTSQ) has biased composition (polar residues). Over residues 1367–1382 (VEDRDPKELVEEERPP) the composition is skewed to basic and acidic residues. The segment covering 1383 to 1398 (SRNTRSASVQKSSNQE) has biased composition (polar residues). Over residues 1428-1444 (KVKDQKPEELIEEDRPP) the composition is skewed to basic and acidic residues. Residues 1445 to 1459 (SRNTRSASAQKTVAA) show a composition bias toward polar residues. Low complexity predominate over residues 1533-1546 (AAASTSSSRAGSVT). The segment covering 1566 to 1576 (VQEEEEEEAEE) has biased composition (acidic residues). A compositionally biased stretch (polar residues) spans 1581 to 1606 (SRSTRSASVKNTTVDPSSSALASTKR). Residues 1601–1784 (LASTKRTTSR…LLRSARRAKQ (184 aa)) form an important for nuclear localization region. The segment at residues 1630 to 1642 (TPKRGRPAKKDAG) is a DNA-binding region (a.T hook 1). The required for chromosome segregation, nuclear growth, nucleoplasmic accumulation and cell cycle timing, but not required for nuclear envelope and kinetochore localization stretch occupies residues 1630–1784 (TPKRGRPAKK…LLRSARRAKQ (155 aa)). Residues 1716–1735 (AGTSKQSRSVTRSRASSIDV) show a composition bias toward polar residues. Residues 1746–1758 (KRGRGRPPKTVLE) constitute a DNA-binding region (a.T hook 2).

As to expression, ubiquitously expressed (at protein level).

It localises to the nucleus. The protein resides in the nucleoplasm. It is found in the nucleus envelope. Its subcellular location is the nucleus inner membrane. The protein localises to the nuclear pore complex. It localises to the chromosome. The protein resides in the centromere. It is found in the kinetochore. In terms of biological role, nuclear envelope protein which has essential roles in assembly of nuclear pore complexes and in chromatin maintenance during the cell cycle. Appears to be a stable structural component of the nuclear envelope during interphase. In dividing cells, localizes to kinetochores during early stages of mitosis and then to chromatin during late mitosis. Important for several mitotic processes including chromosome condensation, kinetochore assembly, chromosome segregation and cell-cycle timing. In postmitotic cells, plays a role in the early steps of nuclear pore complex assembly by recruiting the nucleoporins npp-10 and npp-5 to chromatin. Also involved in meiotic chromosome segregation. May function downstream of the Ran GTPase signaling pathway. In Caenorhabditis elegans, this protein is Protein mel-28.